The following is a 380-amino-acid chain: Protein GOLM2 (380 aa).

N-acetylmethionine is present on M1. The Cytoplasmic segment spans residues 1 to 14 (MVGFGANRRAGRLP). The chain crosses the membrane as a helical; Signal-anchor for type II membrane protein span at residues 15-35 (SLVLAVLLVVIAVLAFNYWSI). Residues 35-195 (ISSRHVLLQE…QFLQEQKQEA (161 aa)) are a coiled coil. At 36–380 (SSRHVLLQEE…YGKQRFNDAL (345 aa)) the chain is on the lumenal side. Basic and acidic residues-rich tracts occupy residues 192-212 (KQEA…DNHA) and 227-247 (KNEE…KRGG). Residues 192–254 (KQEAHKFESK…RGGDAGMPGI (63 aa)) are disordered. Phosphoserine occurs at positions 233 and 275. The disordered stretch occupies residues 280–380 (ESHQVISHLP…YGKQRFNDAL (101 aa)). The span at 305–321 (NHNGNSRTSKQNPSNPL) shows a compositional bias: polar residues. Basic and acidic residues predominate over residues 344-380 (ATKDRAGDFHKLKQNDEERELQMDPADYGKQRFNDAL).

It belongs to the GOLM family.

The protein localises to the membrane. The chain is Protein GOLM2 (GOLM2) from Bos taurus (Bovine).